A 917-amino-acid chain; its full sequence is Bifunctional aspartokinase/homoserine dehydrogenase 2, chloroplastic (917 aa).

The transit peptide at 1–89 (MQGLAVSCQL…EVNTYLPKGD (89 aa)) directs the protein to the chloroplast. An aspartokinase region spans residues 90–338 (MWSVHKFGGT…VSEAVILSTL (249 aa)). Positions 339 to 563 (SYQEAWEMSY…LSKTTLAVGI (225 aa)) are interface. ACT domains lie at 413-488 (VEGT…VING) and 494-571 (AVGL…LIGG). The homoserine dehydrogenase stretch occupies residues 564-917 (IGPGLIGGAL…RLASYLGAPS (354 aa)). NAD(+)-binding residues include I569 and T650. I569, T650, and K674 together coordinate NADP(+). The NADPH site is built by I569, T650, and K674. E701, V704, A706, and L708 together coordinate Na(+). G759 and E762 together coordinate NADP(+). L-homoserine is bound by residues E762 and D773. K777 serves as the catalytic Proton donor. G894 serves as a coordination point for NAD(+). Residue G894 participates in NADP(+) binding. An NADPH-binding site is contributed by G894.

The protein in the N-terminal section; belongs to the aspartokinase family. It in the C-terminal section; belongs to the homoserine dehydrogenase family. In terms of assembly, homo- or heterodimer. A metal cation serves as cofactor.

Its subcellular location is the plastid. It is found in the chloroplast. It catalyses the reaction L-homoserine + NADP(+) = L-aspartate 4-semialdehyde + NADPH + H(+). The catalysed reaction is L-homoserine + NAD(+) = L-aspartate 4-semialdehyde + NADH + H(+). It carries out the reaction L-aspartate + ATP = 4-phospho-L-aspartate + ADP. Its pathway is amino-acid biosynthesis; L-lysine biosynthesis via DAP pathway; (S)-tetrahydrodipicolinate from L-aspartate: step 1/4. The protein operates within amino-acid biosynthesis; L-methionine biosynthesis via de novo pathway; L-homoserine from L-aspartate: step 1/3. It participates in amino-acid biosynthesis; L-methionine biosynthesis via de novo pathway; L-homoserine from L-aspartate: step 3/3. It functions in the pathway amino-acid biosynthesis; L-threonine biosynthesis; L-threonine from L-aspartate: step 1/5. Its pathway is amino-acid biosynthesis; L-threonine biosynthesis; L-threonine from L-aspartate: step 3/5. Functionally, bifunctional aspartate kinase and homoserine dehydrogenase that catalyzes the first and the third steps toward the synthesis of lysine, methionine and threonine from aspartate. The chain is Bifunctional aspartokinase/homoserine dehydrogenase 2, chloroplastic (AKHSDH2) from Zea mays (Maize).